Consider the following 906-residue polypeptide: Protein translocase subunit SecA (906 aa).

ATP contacts are provided by residues Q87, 105 to 109 (GEGKT), and D512. The interval 839–896 (LEEQQRQQSEAAPRTYTHATAESQLADEEAAGEEGHTTFVRDEQKIGRNDPCPCGSGK) is disordered. Basic and acidic residues predominate over residues 871–886 (EEGHTTFVRDEQKIGR). C890, C892, C901, and H902 together coordinate Zn(2+).

This sequence belongs to the SecA family. Monomer and homodimer. Part of the essential Sec protein translocation apparatus which comprises SecA, SecYEG and auxiliary proteins SecDF-YajC and YidC. It depends on Zn(2+) as a cofactor.

It localises to the cell inner membrane. Its subcellular location is the cytoplasm. The catalysed reaction is ATP + H2O + cellular proteinSide 1 = ADP + phosphate + cellular proteinSide 2.. In terms of biological role, part of the Sec protein translocase complex. Interacts with the SecYEG preprotein conducting channel. Has a central role in coupling the hydrolysis of ATP to the transfer of proteins into and across the cell membrane, serving both as a receptor for the preprotein-SecB complex and as an ATP-driven molecular motor driving the stepwise translocation of polypeptide chains across the membrane. This chain is Protein translocase subunit SecA, found in Aeromonas salmonicida (strain A449).